Reading from the N-terminus, the 85-residue chain is ATP synthase subunit c (85 aa).

2 consecutive transmembrane segments (helical) span residues Ile-10 to Leu-30 and Phe-53 to Phe-73.

The protein belongs to the ATPase C chain family. As to quaternary structure, F-type ATPases have 2 components, F(1) - the catalytic core - and F(0) - the membrane proton channel. F(1) has five subunits: alpha(3), beta(3), gamma(1), delta(1), epsilon(1). F(0) has three main subunits: a(1), b(2) and c(10-14). The alpha and beta chains form an alternating ring which encloses part of the gamma chain. F(1) is attached to F(0) by a central stalk formed by the gamma and epsilon chains, while a peripheral stalk is formed by the delta and b chains.

It is found in the cell inner membrane. Functionally, f(1)F(0) ATP synthase produces ATP from ADP in the presence of a proton or sodium gradient. F-type ATPases consist of two structural domains, F(1) containing the extramembraneous catalytic core and F(0) containing the membrane proton channel, linked together by a central stalk and a peripheral stalk. During catalysis, ATP synthesis in the catalytic domain of F(1) is coupled via a rotary mechanism of the central stalk subunits to proton translocation. Key component of the F(0) channel; it plays a direct role in translocation across the membrane. A homomeric c-ring of between 10-14 subunits forms the central stalk rotor element with the F(1) delta and epsilon subunits. This is ATP synthase subunit c from Vibrio vulnificus (strain CMCP6).